We begin with the raw amino-acid sequence, 426 residues long: MLDNQLLRENPQYVATQLLKRGFQFDAVTFSQLEEKRKALQVSTQSLQNERNLRSKAIGEAKSRGENIGPMREEVNKLGAILEQQKTELDEVLKQIEVISLSLPNIPHESVPVGKDELDNQEIRKWGDVPAFSFPVKSHDELGEALGQMDFALAAKITGSRFVVMKGHLARLHRALIQFMLDIHIQQHGYQEIYVPYIVNADSLLGTGQLPKFEADLFKLTGDNGYYLTSTSEIPVTNTVREMILSAEQLPIRYVCHSPCFRSEAGSYGKDTKGMIRQHQFEKVELVWITKPEDSYNALEQLTQHAEIILQRLNLPYRVVALCTGDIGAGSAKTYDLEVWLPSQNTYREISSCSNMEAFQARRMKARFRNPDTNEIQLVHTLNGSGLAVGRTLVAIMENYQDEHGNIHIPDALKPYLGGIDIISVK.

Position 231-233 (231-233) interacts with L-serine; the sequence is TSE. 262 to 264 provides a ligand contact to ATP; the sequence is RSE. Glutamate 285 lines the L-serine pocket. 349–352 contacts ATP; it reads EISS. Residue serine 385 participates in L-serine binding.

It belongs to the class-II aminoacyl-tRNA synthetase family. Type-1 seryl-tRNA synthetase subfamily. Homodimer. The tRNA molecule binds across the dimer.

Its subcellular location is the cytoplasm. It catalyses the reaction tRNA(Ser) + L-serine + ATP = L-seryl-tRNA(Ser) + AMP + diphosphate + H(+). The enzyme catalyses tRNA(Sec) + L-serine + ATP = L-seryl-tRNA(Sec) + AMP + diphosphate + H(+). The protein operates within aminoacyl-tRNA biosynthesis; selenocysteinyl-tRNA(Sec) biosynthesis; L-seryl-tRNA(Sec) from L-serine and tRNA(Sec): step 1/1. Its function is as follows. Catalyzes the attachment of serine to tRNA(Ser). Is also able to aminoacylate tRNA(Sec) with serine, to form the misacylated tRNA L-seryl-tRNA(Sec), which will be further converted into selenocysteinyl-tRNA(Sec). The sequence is that of Serine--tRNA ligase from Legionella pneumophila subsp. pneumophila (strain Philadelphia 1 / ATCC 33152 / DSM 7513).